The following is a 228-amino-acid chain: Probable 26S proteasome regulatory subunit p28 (228 aa).

ANK repeat units follow at residues Met-1–Leu-30, Asp-35–Leu-64, Ser-71–Leu-100, Gln-106–Ile-135, Phe-139–Asn-168, and Gln-173–Leu-203.

Interacts with RPT3.

Acts as a chaperone during the assembly of the 26S proteasome, specifically of the 19S regulatory complex (RC) and appears to have an overlapping role with RPN14. The chain is Probable 26S proteasome regulatory subunit p28 (NAS6) from Saccharomyces cerevisiae (strain ATCC 204508 / S288c) (Baker's yeast).